The chain runs to 147 residues: Nucleoside diphosphate kinase (147 aa).

Lys11, Phe59, Arg87, Thr93, Arg104, and Asn114 together coordinate ATP. The Pros-phosphohistidine intermediate role is filled by His117.

The protein belongs to the NDK family. In terms of assembly, homotetramer. Requires Mg(2+) as cofactor.

Its subcellular location is the cytoplasm. The catalysed reaction is a 2'-deoxyribonucleoside 5'-diphosphate + ATP = a 2'-deoxyribonucleoside 5'-triphosphate + ADP. The enzyme catalyses a ribonucleoside 5'-diphosphate + ATP = a ribonucleoside 5'-triphosphate + ADP. Major role in the synthesis of nucleoside triphosphates other than ATP. The ATP gamma phosphate is transferred to the NDP beta phosphate via a ping-pong mechanism, using a phosphorylated active-site intermediate. The polypeptide is Nucleoside diphosphate kinase (Anaeromyxobacter dehalogenans (strain 2CP-1 / ATCC BAA-258)).